The sequence spans 134 residues: Profilin-3 (134 aa).

A disulfide bridge links cysteine 13 with cysteine 118. Positions 84 to 100 (AVIRGKKGSGGITIKKT) match the Involved in PIP2 interaction motif. Threonine 114 is subject to Phosphothreonine.

This sequence belongs to the profilin family. In terms of assembly, occurs in many kinds of cells as a complex with monomeric actin in a 1:1 ratio. Post-translationally, phosphorylated by MAP kinases.

The protein localises to the cytoplasm. It localises to the cytoskeleton. In terms of biological role, binds to actin and affects the structure of the cytoskeleton. At high concentrations, profilin prevents the polymerization of actin, whereas it enhances it at low concentrations. The protein is Profilin-3 of Olea europaea (Common olive).